Reading from the N-terminus, the 222-residue chain is Phosphoribosylformylglycinamidine synthase subunit PurQ (222 aa).

The Glutamine amidotransferase type-1 domain maps to 2-222; it reads KAAVITFPGS…RALLGGMALV (221 aa). Catalysis depends on Cys86, which acts as the Nucleophile. Catalysis depends on residues His194 and Glu196.

As to quaternary structure, part of the FGAM synthase complex composed of 1 PurL, 1 PurQ and 2 PurS subunits.

Its subcellular location is the cytoplasm. The enzyme catalyses N(2)-formyl-N(1)-(5-phospho-beta-D-ribosyl)glycinamide + L-glutamine + ATP + H2O = 2-formamido-N(1)-(5-O-phospho-beta-D-ribosyl)acetamidine + L-glutamate + ADP + phosphate + H(+). It catalyses the reaction L-glutamine + H2O = L-glutamate + NH4(+). It functions in the pathway purine metabolism; IMP biosynthesis via de novo pathway; 5-amino-1-(5-phospho-D-ribosyl)imidazole from N(2)-formyl-N(1)-(5-phospho-D-ribosyl)glycinamide: step 1/2. Its function is as follows. Part of the phosphoribosylformylglycinamidine synthase complex involved in the purines biosynthetic pathway. Catalyzes the ATP-dependent conversion of formylglycinamide ribonucleotide (FGAR) and glutamine to yield formylglycinamidine ribonucleotide (FGAM) and glutamate. The FGAM synthase complex is composed of three subunits. PurQ produces an ammonia molecule by converting glutamine to glutamate. PurL transfers the ammonia molecule to FGAR to form FGAM in an ATP-dependent manner. PurS interacts with PurQ and PurL and is thought to assist in the transfer of the ammonia molecule from PurQ to PurL. The sequence is that of Phosphoribosylformylglycinamidine synthase subunit PurQ from Cereibacter sphaeroides (strain ATCC 17023 / DSM 158 / JCM 6121 / CCUG 31486 / LMG 2827 / NBRC 12203 / NCIMB 8253 / ATH 2.4.1.) (Rhodobacter sphaeroides).